Reading from the N-terminus, the 180-residue chain is uncharacterized protein (180 aa).

The signal sequence occupies residues 1 to 22; sequence MKLRFISSALAAALFAATGSYA. Residues Cys-41 and Cys-81 are joined by a disulfide bond.

It belongs to the fimbrial protein family.

It localises to the fimbrium. This is an uncharacterized protein from Escherichia coli O157:H7.